A 458-amino-acid chain; its full sequence is MTFKKSFDCYDFYDRAKVGEKCTQDDWDLMKIPMKAMELKQKYGLDFKGEFVPTDRDMMEKLFQAGFEMLLECGIYCTDTHRIVKYTEDEIWDAINNVQKEFTLGTGRDAVNVRKRSVGDKRKPIVQGGPTGSPISEDVFMPVHMSYALEKEVDTIVNGVMTSVRGKPPVPKSPYEVLAAKTETRLIKQACAMAGRPGMAVOGPETSLSAQGNISADCAGGMQSTDSHEVSQLNELKIDLDAIAVIAHYNANSDIIMDEQMPIFGGYAGGIEETTIVDVATHINAFVMSNASWHLDGPVHIRWGSTNTRETLTIAGWACATISEFTDMLSGNQYYPCAGPGTEMCLLEASAQSITDTASGREILSGVASAKGVVTDKTTGMEARMMGEVARATAGAEITEINKILDKLVALYEKNYASAPAGKTFQECYDVKTVTPTEEYMQIYDGARKKLEELGLVF.

Residue Pyl202 is a non-standard amino acid, pyrrolysine.

The protein belongs to the monomethylamine methyltransferase family. Can form a complex with MtmC.

It catalyses the reaction Co(I)-[methylamine-specific corrinoid protein] + methylamine + H(+) = methyl-Co(III)-[methylamine-specific corrinoid protein] + NH4(+). The protein operates within one-carbon metabolism; methanogenesis from methylamine. In terms of biological role, catalyzes the transfer of the methyl group from monomethylamine to the corrinoid cofactor of MtmC. The polypeptide is Monomethylamine methyltransferase MtmB2 (mtmB2) (Methanosarcina acetivorans (strain ATCC 35395 / DSM 2834 / JCM 12185 / C2A)).